An 88-amino-acid chain; its full sequence is Small ribosomal subunit protein bS20 (88 aa).

Residues 1–27 are disordered; the sequence is MANSKSAKKRALQSEKRRQHNASRRSM.

The protein belongs to the bacterial ribosomal protein bS20 family.

Its function is as follows. Binds directly to 16S ribosomal RNA. The sequence is that of Small ribosomal subunit protein bS20 from Shewanella putrefaciens (strain CN-32 / ATCC BAA-453).